Reading from the N-terminus, the 329-residue chain is DNA-directed RNA polymerase subunit alpha (329 aa).

The interval 1–235 (MQNSIIGFLK…EQLEAFVDLR (235 aa)) is alpha N-terminal domain (alpha-NTD). The tract at residues 249-329 (FEPILLRPVD…KWPPSSILEE (81 aa)) is alpha C-terminal domain (alpha-CTD).

Belongs to the RNA polymerase alpha chain family. Homodimer. The RNAP catalytic core consists of 2 alpha, 1 beta, 1 beta' and 1 omega subunit. When a sigma factor is associated with the core the holoenzyme is formed, which can initiate transcription.

The enzyme catalyses RNA(n) + a ribonucleoside 5'-triphosphate = RNA(n+1) + diphosphate. Functionally, DNA-dependent RNA polymerase catalyzes the transcription of DNA into RNA using the four ribonucleoside triphosphates as substrates. This chain is DNA-directed RNA polymerase subunit alpha, found in Buchnera aphidicola subsp. Schizaphis graminum (strain Sg).